The following is an 847-amino-acid chain: Protein SEY1 (847 aa).

Residues 1-720 (MSSGEPLSET…KRSIVQHVTQ (720 aa)) are Cytoplasmic-facing. A GB1/RHD3-type G domain is found at 55–290 (GHNYHIVAVF…VENDIFKPEY (236 aa)). 65–72 (GSQSTGKS) serves as a coordination point for GTP. Residues 721–741 (IPYYIYIIILLLGWNEFMAVV) form a helical membrane-spanning segment. Residues 742–744 (RNP) are Lumenal-facing. The helical transmembrane segment at 745-765 (FTFSLAIILGASLYILYTMNL) threads the bilayer. Residues 766–847 (LKPALTVTQR…VTSLNVVEEE (82 aa)) lie on the Cytoplasmic side of the membrane.

This sequence belongs to the TRAFAC class dynamin-like GTPase superfamily. GB1/RHD3 GTPase family. RHD3 subfamily.

It localises to the endoplasmic reticulum membrane. Cooperates with the reticulon proteins and tubule-shaping DP1 family proteins to generate and maintain the structure of the tubular endoplasmic reticulum network. Has GTPase activity, which is required for its function in ER organization. This Lodderomyces elongisporus (strain ATCC 11503 / CBS 2605 / JCM 1781 / NBRC 1676 / NRRL YB-4239) (Yeast) protein is Protein SEY1.